The primary structure comprises 189 residues: ATP synthase subunit b (189 aa).

A helical transmembrane segment spans residues 38–58; it reads PMFLATLIAFILVVLILWFLL.

This sequence belongs to the ATPase B chain family. In terms of assembly, F-type ATPases have 2 components, F(1) - the catalytic core - and F(0) - the membrane proton channel. F(1) has five subunits: alpha(3), beta(3), gamma(1), delta(1), epsilon(1). F(0) has three main subunits: a(1), b(2) and c(10-14). The alpha and beta chains form an alternating ring which encloses part of the gamma chain. F(1) is attached to F(0) by a central stalk formed by the gamma and epsilon chains, while a peripheral stalk is formed by the delta and b chains.

It localises to the cell membrane. In terms of biological role, f(1)F(0) ATP synthase produces ATP from ADP in the presence of a proton or sodium gradient. F-type ATPases consist of two structural domains, F(1) containing the extramembraneous catalytic core and F(0) containing the membrane proton channel, linked together by a central stalk and a peripheral stalk. During catalysis, ATP synthesis in the catalytic domain of F(1) is coupled via a rotary mechanism of the central stalk subunits to proton translocation. Component of the F(0) channel, it forms part of the peripheral stalk, linking F(1) to F(0). This chain is ATP synthase subunit b, found in Mycoplasmopsis agalactiae (strain NCTC 10123 / CIP 59.7 / PG2) (Mycoplasma agalactiae).